The sequence spans 130 residues: Protein NrdI (130 aa).

This sequence belongs to the NrdI family.

Probably involved in ribonucleotide reductase function. The protein is Protein NrdI of Staphylococcus carnosus (strain TM300).